The primary structure comprises 74 residues: uncharacterized protein (74 aa).

Positions 25–62 (QQTIDRLAGLELRMKQLIRAIEVNNELLRTMQEQQNRV) form a coiled coil.

This is an uncharacterized protein from Bacillus subtilis (strain 168).